The sequence spans 508 residues: 25-hydroxyvitamin D-1 alpha hydroxylase, mitochondrial (508 aa).

Cysteine 455 is a binding site for heme.

Belongs to the cytochrome P450 family. Heme serves as cofactor. Kidney.

The protein resides in the mitochondrion membrane. It catalyses the reaction calcidiol + 2 reduced [adrenodoxin] + O2 + 2 H(+) = calcitriol + 2 oxidized [adrenodoxin] + H2O. It carries out the reaction secalciferol + 2 reduced [adrenodoxin] + O2 + 2 H(+) = calcitetrol + 2 oxidized [adrenodoxin] + H2O. The enzyme catalyses 25-hydroxy-24-oxocalciol + 2 reduced [adrenodoxin] + O2 + 2 H(+) = (1S)-1,25-dihydroxy-24-oxocalciol + 2 oxidized [adrenodoxin] + H2O. The catalysed reaction is 25-hydroxyvitamin D2 + 2 reduced [adrenodoxin] + O2 + 2 H(+) = 1alpha,25-dihydroxyvitamin D2 + 2 oxidized [adrenodoxin] + H2O. It participates in hormone biosynthesis; vitamin D biosynthesis. Its activity is regulated as follows. Activated by cardiolipin and dioleoyl phosphatidylethanolamine (DOPE), phospholipids found in the inner mitochondrial membrane. Inhibited by high substrate concentration. A cytochrome P450 monooxygenase involved in vitamin D metabolism and in calcium and phosphorus homeostasis. Catalyzes the rate-limiting step in the activation of vitamin D in the kidney, namely the hydroxylation of 25-hydroxyvitamin D3/calcidiol at the C1alpha-position to form the hormonally active form of vitamin D3, 1alpha,25-dihydroxyvitamin D3/calcitriol that acts via the vitamin D receptor (VDR). Has 1alpha-hydroxylase activity on vitamin D intermediates of the CYP24A1-mediated inactivation pathway. Converts 24R,25-dihydroxyvitamin D3/secalciferol to 1-alpha,24,25-trihydroxyvitamin D3, an active ligand of VDR. Also active on 25-hydroxyvitamin D2. Mechanistically, uses molecular oxygen inserting one oxygen atom into a substrate, and reducing the second into a water molecule, with two electrons provided by NADPH via FDXR/adrenodoxin reductase and FDX1/adrenodoxin. In Homo sapiens (Human), this protein is 25-hydroxyvitamin D-1 alpha hydroxylase, mitochondrial (CYP27B1).